Consider the following 171-residue polypeptide: 3-hydroxydecanoyl-[acyl-carrier-protein] dehydratase (171 aa).

Residue His-70 is part of the active site.

This sequence belongs to the thioester dehydratase family. FabA subfamily. Homodimer.

It is found in the cytoplasm. It carries out the reaction a (3R)-hydroxyacyl-[ACP] = a (2E)-enoyl-[ACP] + H2O. The catalysed reaction is (3R)-hydroxydecanoyl-[ACP] = (2E)-decenoyl-[ACP] + H2O. It catalyses the reaction (2E)-decenoyl-[ACP] = (3Z)-decenoyl-[ACP]. Its pathway is lipid metabolism; fatty acid biosynthesis. In terms of biological role, necessary for the introduction of cis unsaturation into fatty acids. Catalyzes the dehydration of (3R)-3-hydroxydecanoyl-ACP to E-(2)-decenoyl-ACP and then its isomerization to Z-(3)-decenoyl-ACP. Can catalyze the dehydratase reaction for beta-hydroxyacyl-ACPs with saturated chain lengths up to 16:0, being most active on intermediate chain length. The protein is 3-hydroxydecanoyl-[acyl-carrier-protein] dehydratase of Shewanella sediminis (strain HAW-EB3).